The sequence spans 373 residues: Probable peptidoglycan glycosyltransferase FtsW (373 aa).

The next 9 helical transmembrane spans lie at 15-35, 48-68, 80-100, 144-164, 168-188, 192-212, 278-298, 311-331, and 342-362; these read LVIL…VYSA, FYFL…MAVA, AVPI…PGIG, FFST…LILL, DLGA…AAGT, YIIA…MNVD, LGLI…LRGV, FLAF…MAVV, and LPFI…VGIL.

It belongs to the SEDS family. FtsW subfamily.

Its subcellular location is the cell inner membrane. It catalyses the reaction [GlcNAc-(1-&gt;4)-Mur2Ac(oyl-L-Ala-gamma-D-Glu-L-Lys-D-Ala-D-Ala)](n)-di-trans,octa-cis-undecaprenyl diphosphate + beta-D-GlcNAc-(1-&gt;4)-Mur2Ac(oyl-L-Ala-gamma-D-Glu-L-Lys-D-Ala-D-Ala)-di-trans,octa-cis-undecaprenyl diphosphate = [GlcNAc-(1-&gt;4)-Mur2Ac(oyl-L-Ala-gamma-D-Glu-L-Lys-D-Ala-D-Ala)](n+1)-di-trans,octa-cis-undecaprenyl diphosphate + di-trans,octa-cis-undecaprenyl diphosphate + H(+). Its pathway is cell wall biogenesis; peptidoglycan biosynthesis. In terms of biological role, peptidoglycan polymerase that is essential for cell division. In Geobacter sulfurreducens (strain DL-1 / KN400), this protein is Probable peptidoglycan glycosyltransferase FtsW.